The primary structure comprises 273 residues: Thiazole synthase (273 aa).

Lys110 (schiff-base intermediate with DXP) is an active-site residue. 1-deoxy-D-xylulose 5-phosphate-binding positions include Gly171, 198 to 199 (AG), and 220 to 221 (NS).

The protein belongs to the ThiG family. Homotetramer. Forms heterodimers with either ThiH or ThiS.

It is found in the cytoplasm. It carries out the reaction [ThiS sulfur-carrier protein]-C-terminal-Gly-aminoethanethioate + 2-iminoacetate + 1-deoxy-D-xylulose 5-phosphate = [ThiS sulfur-carrier protein]-C-terminal Gly-Gly + 2-[(2R,5Z)-2-carboxy-4-methylthiazol-5(2H)-ylidene]ethyl phosphate + 2 H2O + H(+). Its pathway is cofactor biosynthesis; thiamine diphosphate biosynthesis. Catalyzes the rearrangement of 1-deoxy-D-xylulose 5-phosphate (DXP) to produce the thiazole phosphate moiety of thiamine. Sulfur is provided by the thiocarboxylate moiety of the carrier protein ThiS. In vitro, sulfur can be provided by H(2)S. The protein is Thiazole synthase of Hydrogenovibrio crunogenus (strain DSM 25203 / XCL-2) (Thiomicrospira crunogena).